The chain runs to 196 residues: Molybdopterin synthase catalytic subunit (196 aa).

The disordered stretch occupies residues 1-29 (MSTLPSTDPPPLPASTSSQQPAVHIPPPS). Residues 145–146 (HR), Lys-161, and 168–170 (KRE) contribute to the substrate site. A disordered region spans residues 174–196 (GEPPGQGEWRANRDTDPEGKSTS). A compositionally biased stretch (basic and acidic residues) spans 183 to 196 (RANRDTDPEGKSTS).

Belongs to the MoaE family. MOCS2B subfamily. In terms of assembly, heterotetramer; composed of 2 small (MOCS2A) and 2 large (MOCS2B) subunits.

It is found in the cytoplasm. It carries out the reaction 2 [molybdopterin-synthase sulfur-carrier protein]-C-terminal-Gly-aminoethanethioate + cyclic pyranopterin phosphate + H2O = molybdopterin + 2 [molybdopterin-synthase sulfur-carrier protein]-C-terminal Gly-Gly + 2 H(+). It functions in the pathway cofactor biosynthesis; molybdopterin biosynthesis. Catalytic subunit of the molybdopterin synthase complex, a complex that catalyzes the conversion of precursor Z into molybdopterin. Acts by mediating the incorporation of 2 sulfur atoms from thiocarboxylated MOCS2A into precursor Z to generate a dithiolene group. In Coccidioides immitis (strain RS) (Valley fever fungus), this protein is Molybdopterin synthase catalytic subunit.